The primary structure comprises 321 residues: Replication factor C small subunit (321 aa).

46–53 contacts ATP; the sequence is GPAGVGKT.

This sequence belongs to the activator 1 small subunits family. RfcS subfamily. In terms of assembly, heterohexamer composed of four small subunits (RfcS) and two large subunits (RfcL).

Part of the RFC clamp loader complex which loads the PCNA sliding clamp onto DNA. The complex possesses DNA-dependent ATPase activity which is further stimulated by PCNA. In conjunction with PCNA stimulates DNA synthesis by PolB, relieving inhibition by replication protein A (RPA). This is Replication factor C small subunit (rfcS) from Methanothermobacter thermautotrophicus (strain ATCC 29096 / DSM 1053 / JCM 10044 / NBRC 100330 / Delta H) (Methanobacterium thermoautotrophicum).